We begin with the raw amino-acid sequence, 476 residues long: MDLLFLFFSLLLSYLFFKIWKLIDSKQDKDCYILDYQCHKPTDDRMVSTQFSGEIIYRNQNLGLTEYKFLLKAIVSSGIGEQTYAPRLVFEGREERPSLQDGISEMEEFYVDSIGKLLERNQISPKDIDILVVNVSMLSSTPSLASRIINHYKMRDDVKVFNLTGMGCSASLISVDIVKNIFKSYANKLALVATSESLSPNWYSGNNRSMILANCLFRSGGCAILLTNKRSLRKKAMFKLKCMVRTHHGAREESYNCCIQAEDEQGRVGFYLGKNLPKAATRAFVENLKVITPKILPVTELIRFMLKLLIKKIKIRQNPSKGSTNLPPGTPLKAGINFKTGIEHFCIHTGGKAVIDGIGHSLDLNEYDIEPARMTLHRFGNTSASSLWYVLAYMEAKKRLKRGDRVFMISFGAGFKCNSCVWEVVRDLTGGESKGNVWNHCIDDYPPKSILNPYLEKFGWIQDEDPDTFKVPDAFM.

The signal sequence occupies residues 1–25 (MDLLFLFFSLLLSYLFFKIWKLIDS). An FAE domain is found at 26–313 (KQDKDCYILD…FMLKLLIKKI (288 aa)). Catalysis depends on residues C168, H247, H344, H348, H377, and N381.

The protein belongs to the thiolase-like superfamily. Chalcone/stilbene synthases family. Expressed in siliques, flowers and leaves.

The protein localises to the endoplasmic reticulum. It catalyses the reaction a very-long-chain acyl-CoA + malonyl-CoA + H(+) = a very-long-chain 3-oxoacyl-CoA + CO2 + CoA. Its pathway is lipid metabolism; fatty acid biosynthesis. The protein is 3-ketoacyl-CoA synthase 12 of Arabidopsis thaliana (Mouse-ear cress).